Consider the following 589-residue polypeptide: Cytochrome P450 monooxygenase TRI13 (589 aa).

Positions 1–21 (MFLSLCLMVLALYLLYKWALP) are cleaved as a signal peptide. N-linked (GlcNAc...) asparagine glycosylation is found at asparagine 52, asparagine 219, asparagine 243, and asparagine 366. A heme-binding site is contributed by cysteine 531.

It belongs to the cytochrome P450 family. Heme is required as a cofactor.

Its pathway is sesquiterpene biosynthesis; trichothecene biosynthesis. In terms of biological role, cytochrome P450 monooxygenase; part of the core gene cluster that mediates the biosynthesis of trichothecenes, a very large family of chemically related bicyclic sesquiterpene compounds acting as mycotoxins, including T2-toxin. The biosynthesis of trichothecenes begins with the cyclization of farnesyl diphosphate to trichodiene and is catalyzed by the trichodiene synthase TRI5. Trichodiene undergoes a series of oxygenations catalyzed by the cytochrome P450 monooxygenase TRI4. TRI4 controls the addition of four oxygens at C-2, C-3, C-11, and the C-12, C-13-epoxide to form the intermediate isotrichotriol. Isotrichotriol then undergoes a non-enzymatic isomerization and cyclization to form isotrichodermol. During this process, the oxygen at the C-2 position becomes the pyran ring oxygen and the hydroxyl group at C-11 is lost. More complex type A trichothecenes are built by modifying isotrichodermol through a series of paired hydroxylation and acetylation or acylation steps. Isotrichodermol is converted to isotrichodermin by the acetyltransferase TRI101. TRI101 encodes a C-3 transacetylase that acts as a self-protection or resistance factor during biosynthesis and that the presence of a free C-3 hydroxyl group is a key component of Fusarium trichothecene phytotoxicity. A second hydroxyl group is added to C-15 by the trichothecene C-15 hydroxylase TRI11, producing 15-decalonectrin, which is then acetylated by TRI3, producing calonectrin. A third hydroxyl group is added at C-4 by the cytochrome P450 monooxygenase TRI13, converting calonectrin to 3,15-diacetoxyspirpenol, which is subsequently acetylated by the acetyltransferase TRI7. A fourth hydroxyl group is added to C-8 by the cytochrome P450 monooxygenase TRI1, followed by the addition of an isovaleryl moiety by TRI16. Finally, the acetyl group is removed from the C-3 position by the trichothecene C-3 esterase TRI8 to produce T-2 toxin. In Fusarium sporotrichioides, this protein is Cytochrome P450 monooxygenase TRI13.